Reading from the N-terminus, the 445-residue chain is Trigger factor (445 aa).

The region spanning 172–257 (GDQVVINFVG…VKSVNWAHLP (86 aa)) is the PPIase FKBP-type domain.

Belongs to the FKBP-type PPIase family. Tig subfamily.

Its subcellular location is the cytoplasm. The catalysed reaction is [protein]-peptidylproline (omega=180) = [protein]-peptidylproline (omega=0). Involved in protein export. Acts as a chaperone by maintaining the newly synthesized protein in an open conformation. Functions as a peptidyl-prolyl cis-trans isomerase. The sequence is that of Trigger factor from Polynucleobacter necessarius subsp. necessarius (strain STIR1).